The chain runs to 117 residues: Movement protein TGB2 (117 aa).

The Cytoplasmic portion of the chain corresponds to 1 to 11 (MPLIPPPNPQK). The chain crosses the membrane as a helical span at residues 12–32 (TYQIAVLALGLVLLLAFVLIS). Residues 33–78 (DHSPKVGDHLHNLPFGGEYKDGTKTIKYFQRPNQHSLSKTLAKSHN) lie on the Lumenal side of the membrane. A helical transmembrane segment spans residues 79–99 (TTIFLIILGLIGTLHGLHYFS). Residues 100-117 (NNRRISSSLHCVLCQNKH) are Cytoplasmic-facing.

The protein belongs to the Tymovirales TGBp2 protein family.

The protein localises to the host endoplasmic reticulum membrane. Its function is as follows. Plays a role in viral cell-to-cell propagation, by facilitating genome transport to neighboring plant cells through plasmosdesmata,. This chain is Movement protein TGB2, found in Trifolium (WCMV).